The chain runs to 357 residues: MGINFEDQTTLFNFVVREGNGVKGMIDSGLSSVPRPFVQPLSERIPTQKALTCEATQPIDLSNLDGPQHKEVAKQIVEAAETLGFFQVVNHGVSVELLELLKSSAHEFFAQAPEEKSMYLKEVSPSKLVKYGTSFVPDKEKAIEWKDYVSMLYTNDSEALQHWPQPCREVALEFLNSSMEMVKNVVNILMENVGVTLEEEKMNGLMGTKMVNMNYYPTCPSPELTVGVGRHSDMGMLTVLLQDGIGGLYVKLDNGEWAEIPPVHGALVINIGDTLQILSNGKYKSAEHRVRTTNIGSRVSVPIFTAPNPSQKVGPLPEVVKRDGVARYKEFLFQDYMNNFFGQPHDGKKSLDFARAE.

In terms of domain architecture, Fe2OG dioxygenase spans 206–307 (MGTKMVNMNY…RVSVPIFTAP (102 aa)). A 2-oxoglutarate-binding site is contributed by tyrosine 216. 3 residues coordinate Fe cation: histidine 231, aspartate 233, and histidine 288. 2-oxoglutarate-binding residues include arginine 298 and serine 300.

It belongs to the iron/ascorbate-dependent oxidoreductase family. L-ascorbate is required as a cofactor. Requires Fe(2+) as cofactor. In terms of tissue distribution, expressed in both primary and lateral roots under iron-deficient conditions, except in apical root zones, and mostly in the root epidermal layer.

It carries out the reaction scopoletin + 2-oxoglutarate + O2 = fraxetin + succinate + CO2. The protein operates within phenylpropanoid metabolism. Its function is as follows. Involved in the pathway of sideretin biosynthesis from feruloyl CoA, a redox-active catecholic metabolite exuded by roots in response to iron deficiency in order to facilitate the uptake of iron; this pathway consists in the successive conversion from feruloyl CoA to scopoletin, from scopoletin to fraxetin and from fraxetin to sideretin. Catalyzes the biosynthesis of fraxetin via scopoletin hydroxylation. This Arabidopsis thaliana (Mouse-ear cress) protein is Scopoletin 8-hydroxylase.